The following is a 132-amino-acid chain: Small ribosomal subunit protein uS9 (132 aa).

Belongs to the universal ribosomal protein uS9 family.

This Methanothrix thermoacetophila (strain DSM 6194 / JCM 14653 / NBRC 101360 / PT) (Methanosaeta thermophila) protein is Small ribosomal subunit protein uS9.